The sequence spans 381 residues: Protein-glutamate methylesterase/protein-glutamine glutaminase (381 aa).

Positions 8 to 125 (QVLCIDDSAL…RDGMNEYADQ (118 aa)) constitute a Response regulatory domain. Asp59 carries the post-translational modification 4-aspartylphosphate. Positions 183–375 (FSSTEKLIIV…PHVLARLSAH (193 aa)) constitute a CheB-type methylesterase domain. Active-site residues include Ser195, His221, and Asp317.

It belongs to the CheB family. Post-translationally, phosphorylated by CheA. Phosphorylation of the N-terminal regulatory domain activates the methylesterase activity.

It is found in the cytoplasm. It carries out the reaction [protein]-L-glutamate 5-O-methyl ester + H2O = L-glutamyl-[protein] + methanol + H(+). The catalysed reaction is L-glutaminyl-[protein] + H2O = L-glutamyl-[protein] + NH4(+). Involved in chemotaxis. Part of a chemotaxis signal transduction system that modulates chemotaxis in response to various stimuli. Catalyzes the demethylation of specific methylglutamate residues introduced into the chemoreceptors (methyl-accepting chemotaxis proteins or MCP) by CheR. Also mediates the irreversible deamidation of specific glutamine residues to glutamic acid. This chain is Protein-glutamate methylesterase/protein-glutamine glutaminase, found in Ralstonia nicotianae (strain ATCC BAA-1114 / GMI1000) (Ralstonia solanacearum).